The following is a 1033-amino-acid chain: Complement receptor type 2 (1033 aa).

The signal sequence occupies residues 1 to 20; that stretch reads MGAAGLLGVFLALVAPGVLG. Sushi domains follow at residues 21 to 84, 89 to 148, 152 to 212, 213 to 273, 274 to 344, 349 to 408, 409 to 468, 469 to 524, 525 to 595, 600 to 659, 660 to 716, 717 to 781, 786 to 845, 849 to 909, and 910 to 970; these read ISCG…KCEY, SSCP…TCVS, LECP…TCEE, ARCK…VCEE, IFCP…RCEL, VQCP…VCEK, ECQA…QCKV, AACE…LCKE, ITCP…LCKL, VQCS…VCEK, ETCQ…LCKV, IHCH…QCLR, TRCP…TCIK, IGCP…HCKE, and VNCS…VCRS. At 21–971 the chain is on the extracellular side; sequence ISCGSPPPIL…NPPLAVCRSR (951 aa). Cystine bridges form between Cys23–Cys65, Cys51–Cys82, Cys91–Cys132, Cys118–Cys146, Cys154–Cys197, Cys183–Cys210, Cys215–Cys256, Cys242–Cys271, Cys276–Cys325, Cys305–Cys342, Cys351–Cys393, Cys379–Cys406, Cys410–Cys453, Cys439–Cys466, Cys471–Cys509, Cys495–Cys522, Cys527–Cys576, Cys556–Cys593, Cys602–Cys644, Cys630–Cys657, Cys662–Cys699, Cys685–Cys714, Cys719–Cys762, Cys748–Cys779, Cys788–Cys830, Cys816–Cys843, Cys851–Cys894, and Cys880–Cys907. N-linked (GlcNAc...) asparagine glycosylation is found at Asn121 and Asn127. Asn294 carries an N-linked (GlcNAc...) asparagine glycan. N-linked (GlcNAc...) asparagine glycosylation is present at Asn372. N-linked (GlcNAc...) asparagine glycosylation occurs at Asn492. Asn623 carries an N-linked (GlcNAc...) asparagine glycan. N-linked (GlcNAc...) asparagine glycosylation is present at Asn682. Residues Asn800, Asn823, and Asn861 are each glycosylated (N-linked (GlcNAc...) asparagine). The N-linked (GlcNAc...) asparagine glycan is linked to Asn911. Intrachain disulfides connect Cys912/Cys955 and Cys941/Cys968. A helical membrane pass occupies residues 972-999; that stretch reads SLAPVLCGIAAGLILLTFLIVITLYVIS. At 1000–1033 the chain is on the cytoplasmic side; sequence KHRARNYYTDTSQKEAFHLEAREVYSVDPYNPAS.

This sequence belongs to the receptors of complement activation (RCA) family. As to quaternary structure, interacts (via Sushi domain 1 and 2) with C3. Interacts with CD19. Part of a complex composed of CD19, CR2/CD21, CD81 and IFITM1/CD225 in the membrane of mature B-cells. Interacts (via Sushi domain 1 and 2) with FCER2 (via the C-terminus). Interacts with CD23. Interacts with FCRL5. Interacts with CR1. Interacts with INFNA1. In terms of assembly, (Microbial infection) Interacts with Epstein-Barr virus gp350 protein. As to expression, mature B-lymphocytes, T-lymphocytes, pharyngeal epithelial cells, astrocytes and follicular dendritic cells of the spleen.

The protein localises to the cell membrane. Functionally, serves as a receptor for various ligands including complement component CD3d, HNRNPU OR IFNA1. When C3d is bound to antigens, attaches to C3d on B-cell surface and thereby facilitates the recognition and uptake of antigens by B-cells. This interaction enhances B-cell activation and subsequent immune responses. Forms a complex with several partners on the surface of B-cells including CD19, FCRL5 and CD81, to form the B-cell coreceptor complex that plays a crucial role in B-cell activation and signaling. Also induces specific intracellular signaling separately from the BCR and CD19 by activating the tyrosine kinase SRC, which then phosphorylates nucleolin/NCL and triggers AKT and GSK3 kinase activities in a SYK/CD19-independent manner. Acts as a ligand for CD23 (FcepsilonRII), a low-affinity receptor for IgE, which is expressed on B-cells and other immune cells, and thus participates in the regulation of IgE production. In terms of biological role, (Microbial infection) Acts as a receptor for Epstein-Barr virus. In Homo sapiens (Human), this protein is Complement receptor type 2 (CR2).